A 147-amino-acid chain; its full sequence is Hemoglobin subunit beta (147 aa).

At Val-2 the chain carries N-acetylvaline. The 145-residue stretch at 3–147 (HLTPDEKAAV…VANALAHKYH (145 aa)) folds into the Globin domain. Thr-13 carries the phosphothreonine modification. Ser-45 carries the post-translational modification Phosphoserine. Residue Lys-60 is modified to N6-acetyllysine. His-64 contributes to the heme b binding site. Lys-83 is subject to N6-acetyllysine. His-93 contacts heme b. Position 94 is an S-nitrosocysteine (Cys-94). Lys-145 carries the N6-acetyllysine modification.

The protein belongs to the globin family. In terms of assembly, heterotetramer of two alpha chains and two beta chains. As to expression, red blood cells.

Functionally, involved in oxygen transport from the lung to the various peripheral tissues. The chain is Hemoglobin subunit beta (HBB) from Colobus polykomos (Western black-and-white colobus monkey).